The sequence spans 56 residues: MFNIFLDDAFIHSNNPFFGKLPEAYAISDPIVDVMPIIPVLSFLLAFVWQAAVSFR.

Positions 1–19 (MFNIFLDDAFIHSNNPFFG) are excised as a propeptide. The chain crosses the membrane as a helical span at residues 35 to 55 (MPIIPVLSFLLAFVWQAAVSF).

It belongs to the PsbK family. As to quaternary structure, PSII is composed of 1 copy each of membrane proteins PsbA, PsbB, PsbC, PsbD, PsbE, PsbF, PsbH, PsbI, PsbJ, PsbK, PsbL, PsbM, PsbT, PsbX, PsbY, PsbZ, Psb30/Ycf12, at least 3 peripheral proteins of the oxygen-evolving complex and a large number of cofactors. It forms dimeric complexes.

It localises to the plastid. The protein localises to the chloroplast thylakoid membrane. In terms of biological role, one of the components of the core complex of photosystem II (PSII). PSII is a light-driven water:plastoquinone oxidoreductase that uses light energy to abstract electrons from H(2)O, generating O(2) and a proton gradient subsequently used for ATP formation. It consists of a core antenna complex that captures photons, and an electron transfer chain that converts photonic excitation into a charge separation. This chain is Photosystem II reaction center protein K, found in Pinus thunbergii (Japanese black pine).